The chain runs to 370 residues: ADP-ribosylhydrolase ARH3 (370 aa).

Residue E47 participates in Mg(2+) binding. A Phosphothreonine modification is found at T70. Mg(2+) is bound by residues T82, D83, and D84. D83 serves as a coordination point for substrate. Residues 152 to 158 (KGSYGNG), H188, L241, and I277 each bind substrate. Residues D320, D322, and T323 each contribute to the Mg(2+) site.

Belongs to the ADP-ribosylglycohydrolase family. In terms of assembly, monomer. Mg(2+) serves as cofactor. Ubiquitous.

It is found in the nucleus. It localises to the cytoplasm. Its subcellular location is the chromosome. The protein localises to the mitochondrion matrix. It catalyses the reaction [(1''-&gt;2')-ADP-alpha-D-ribose](n) + H2O = [(1''-&gt;2')-ADP-alpha-D-ribose](n-1) + ADP-D-ribose. It carries out the reaction 1''-O-acetyl-ADP-alpha-D-ribose + H2O = ADP-D-ribose + acetate + H(+). The catalysed reaction is O-(ADP-D-ribosyl)-L-seryl-[protein] + H2O = ADP-D-ribose + L-seryl-[protein]. The enzyme catalyses alpha-NAD(+) + H2O = ADP-D-ribose + nicotinamide + H(+). Its activity is regulated as follows. The protein undergoes a dramatic conformational switch from closed to open states upon substrate-binding, which enables specific substrate recognition for the 1''-O-linkage. The glutamate flap (Glu-47) blocks substrate entrance to Mg(2+) in the unliganded closed state. In presence of substrate, Glu-47 is ejected from the active site: this closed-to-open transition significantly widens the substrate-binding channel and precisely positions the scissile 1''-O-linkage for cleavage while securing tightly 2'- and 3'-hydroxyls of ADP-ribose. Functionally, ADP-ribosylhydrolase that preferentially hydrolyzes the scissile alpha-O-linkage attached to the anomeric C1'' position of ADP-ribose and acts on different substrates, such as proteins ADP-ribosylated on serine and threonine, free poly(ADP-ribose) and O-acetyl-ADP-D-ribose. Specifically acts as a serine mono-ADP-ribosylhydrolase by mediating the removal of mono-ADP-ribose attached to serine residues on proteins, thereby playing a key role in DNA damage response. Serine ADP-ribosylation of proteins constitutes the primary form of ADP-ribosylation of proteins in response to DNA damage. Does not hydrolyze ADP-ribosyl-arginine, -cysteine, -diphthamide, or -asparagine bonds. Also able to degrade protein free poly(ADP-ribose), which is synthesized in response to DNA damage: free poly(ADP-ribose) acts as a potent cell death signal and its degradation by ADPRHL2 protects cells from poly(ADP-ribose)-dependent cell death, a process named parthanatos. Also hydrolyzes free poly(ADP-ribose) in mitochondria. Specifically digests O-acetyl-ADP-D-ribose, a product of deacetylation reactions catalyzed by sirtuins. Specifically degrades 1''-O-acetyl-ADP-D-ribose isomer, rather than 2''-O-acetyl-ADP-D-ribose or 3''-O-acetyl-ADP-D-ribose isomers. This is ADP-ribosylhydrolase ARH3 (Adprs) from Mus musculus (Mouse).